The chain runs to 335 residues: Glyceraldehyde-3-phosphate dehydrogenase (335 aa).

NAD(+)-binding positions include 12–13 (RI), Asp34, and Lys79. Residues 150–152 (SCT), Thr181, 210–211 (TG), and Arg233 contribute to the D-glyceraldehyde 3-phosphate site. Residue Cys151 is the Nucleophile of the active site. Asn315 contributes to the NAD(+) binding site.

This sequence belongs to the glyceraldehyde-3-phosphate dehydrogenase family. In terms of assembly, homotetramer.

Its subcellular location is the cytoplasm. It catalyses the reaction D-glyceraldehyde 3-phosphate + phosphate + NAD(+) = (2R)-3-phospho-glyceroyl phosphate + NADH + H(+). It participates in carbohydrate degradation; glycolysis; pyruvate from D-glyceraldehyde 3-phosphate: step 1/5. The chain is Glyceraldehyde-3-phosphate dehydrogenase (GPD) from Debaryomyces hansenii (strain ATCC 36239 / CBS 767 / BCRC 21394 / JCM 1990 / NBRC 0083 / IGC 2968) (Yeast).